We begin with the raw amino-acid sequence, 596 residues long: Elongation factor 4 (596 aa).

Positions 2–184 (SHIRNFSIIA…RLVHTIPAPE (183 aa)) constitute a tr-type G domain. Residues 14–19 (DHGKST) and 131–134 (NKMD) contribute to the GTP site.

This sequence belongs to the TRAFAC class translation factor GTPase superfamily. Classic translation factor GTPase family. LepA subfamily.

Its subcellular location is the cell inner membrane. The enzyme catalyses GTP + H2O = GDP + phosphate + H(+). Required for accurate and efficient protein synthesis under certain stress conditions. May act as a fidelity factor of the translation reaction, by catalyzing a one-codon backward translocation of tRNAs on improperly translocated ribosomes. Back-translocation proceeds from a post-translocation (POST) complex to a pre-translocation (PRE) complex, thus giving elongation factor G a second chance to translocate the tRNAs correctly. Binds to ribosomes in a GTP-dependent manner. The sequence is that of Elongation factor 4 from Pseudomonas putida (strain GB-1).